Reading from the N-terminus, the 184-residue chain is Shikimate kinase (184 aa).

ATP is bound at residue 18–23; it reads GAGKTT. Position 22 (Thr-22) interacts with Mg(2+). Asp-40, Arg-64, and Gly-86 together coordinate substrate. Residue Arg-124 coordinates ATP. Arg-143 contributes to the substrate binding site. ATP is bound at residue Gln-160.

Belongs to the shikimate kinase family. Monomer. The cofactor is Mg(2+).

It localises to the cytoplasm. The catalysed reaction is shikimate + ATP = 3-phosphoshikimate + ADP + H(+). It participates in metabolic intermediate biosynthesis; chorismate biosynthesis; chorismate from D-erythrose 4-phosphate and phosphoenolpyruvate: step 5/7. In terms of biological role, catalyzes the specific phosphorylation of the 3-hydroxyl group of shikimic acid using ATP as a cosubstrate. This chain is Shikimate kinase, found in Chromobacterium violaceum (strain ATCC 12472 / DSM 30191 / JCM 1249 / CCUG 213 / NBRC 12614 / NCIMB 9131 / NCTC 9757 / MK).